A 310-amino-acid polypeptide reads, in one-letter code: Ribose-phosphate pyrophosphokinase (310 aa).

ATP is bound by residues 34-36 (DQE) and 93-94 (RQ). H127 and D167 together coordinate Mg(2+). K190 is an active-site residue. D-ribose 5-phosphate is bound by residues R192, D216, and 220-224 (DSGGT).

The protein belongs to the ribose-phosphate pyrophosphokinase family. Class I subfamily. Homohexamer. Mg(2+) serves as cofactor.

Its subcellular location is the cytoplasm. It catalyses the reaction D-ribose 5-phosphate + ATP = 5-phospho-alpha-D-ribose 1-diphosphate + AMP + H(+). The protein operates within metabolic intermediate biosynthesis; 5-phospho-alpha-D-ribose 1-diphosphate biosynthesis; 5-phospho-alpha-D-ribose 1-diphosphate from D-ribose 5-phosphate (route I): step 1/1. In terms of biological role, involved in the biosynthesis of the central metabolite phospho-alpha-D-ribosyl-1-pyrophosphate (PRPP) via the transfer of pyrophosphoryl group from ATP to 1-hydroxyl of ribose-5-phosphate (Rib-5-P). The chain is Ribose-phosphate pyrophosphokinase from Agrobacterium fabrum (strain C58 / ATCC 33970) (Agrobacterium tumefaciens (strain C58)).